A 239-amino-acid chain; its full sequence is Purine nucleoside phosphorylase DeoD-type (239 aa).

An a purine D-ribonucleoside-binding site is contributed by His5. Phosphate is bound by residues Gly21, Arg25, Arg44, and 88–91 (RVGS). Residues 180 to 182 (EME) and 204 to 205 (SD) each bind a purine D-ribonucleoside. Catalysis depends on Asp205, which acts as the Proton donor.

Belongs to the PNP/UDP phosphorylase family. Homohexamer; trimer of homodimers.

The enzyme catalyses a purine D-ribonucleoside + phosphate = a purine nucleobase + alpha-D-ribose 1-phosphate. The catalysed reaction is a purine 2'-deoxy-D-ribonucleoside + phosphate = a purine nucleobase + 2-deoxy-alpha-D-ribose 1-phosphate. Its function is as follows. Catalyzes the reversible phosphorolytic breakdown of the N-glycosidic bond in the beta-(deoxy)ribonucleoside molecules, with the formation of the corresponding free purine bases and pentose-1-phosphate. This Yersinia pestis bv. Antiqua (strain Antiqua) protein is Purine nucleoside phosphorylase DeoD-type.